The sequence spans 514 residues: MARPRSLVSPLLSGVFCQCDTVSGAPHSHETPASPSLAAAALAADPCGGLLCGGPEHERRLQILFQELDVNKDGAICINDLAVGLKRLGVHRTELELRKIVKAGDKDQDGQLDFDEFVHYLRDHEKKLRLVFKSLDKKNDGRIDAQEIMQSLRDLGVNISEQQAEKILKSMDKNGTMTIDWNEWRDYHLLHSAENIPEIILYWKHSTIFDVGENLLVPDEFTVEEKQTGMWWRHLVAGGGAGAVSRTCTAPLDRLKVLMQVHASRSNNMSILGGFTHMIREGGFRSLWRGNGINVIKIAPESAIKFMAYEQIKRIIGSNQETLGIHERFVAGSLAGVIAQSSIYPMEVLKTRMALRKTGQYQGVLDCGKKILLQEGLSAFYKGYVPNMLGIIPYAGIDLAVYETLKNAWLQRYATSSADPGVFVLLACGTVSSTCGQLASYPLALVRTRMQAEASVEGAPQMTMSKLFKHIVKTEGAFGLYRGLAPNFMKVIPAVSISYVVYENLKLTLGVQSR.

Residues 1–234 (MARPRSLVSP…EKQTGMWWRH (234 aa)) are Mitochondrial intermembrane-facing. 4 consecutive EF-hand domains span residues 56 to 91 (EHER…LGVH), 92 to 122 (RTEL…HYLR), 123 to 158 (DHEK…LGVN), and 159 to 194 (ISEQ…HSAE). Positions 69, 71, 73, 80, 105, 107, 109, 111, and 116 each coordinate Ca(2+). Solcar repeat units follow at residues 229–315 (GMWW…IKRI), 323–408 (LGIH…LKNA), and 420–508 (PGVF…LKLT). A helical membrane pass occupies residues 235–252 (LVAGGGAGAVSRTCTAPL). At 253–289 (DRLKVLMQVHASRSNNMSILGGFTHMIREGGFRSLWR) the chain is on the mitochondrial matrix side. Residues 290–309 (GNGINVIKIAPESAIKFMAY) form a helical membrane-spanning segment. The Mitochondrial intermembrane portion of the chain corresponds to 310 to 332 (EQIKRIIGSNQETLGIHERFVAG). Residues 333–346 (SLAGVIAQSSIYPM) form a helical membrane-spanning segment. At 347–382 (EVLKTRMALRKTGQYQGVLDCGKKILLQEGLSAFYK) the chain is on the mitochondrial matrix side. The chain crosses the membrane as a helical span at residues 383-402 (GYVPNMLGIIPYAGIDLAVY). Topologically, residues 403–425 (ETLKNAWLQRYATSSADPGVFVL) are mitochondrial intermembrane. The helical transmembrane segment at 426 to 443 (LACGTVSSTCGQLASYPL) threads the bilayer. Topologically, residues 444-482 (ALVRTRMQAEASVEGAPQMTMSKLFKHIVKTEGAFGLYR) are mitochondrial matrix. A helical transmembrane segment spans residues 483–502 (GLAPNFMKVIPAVSISYVVY). Topologically, residues 503–514 (ENLKLTLGVQSR) are mitochondrial intermembrane.

Belongs to the mitochondrial carrier (TC 2.A.29) family.

The protein localises to the mitochondrion inner membrane. In terms of biological role, calcium-dependent mitochondrial solute carrier. The polypeptide is Calcium-binding mitochondrial carrier protein SCaMC-2 (slc25a25) (Xenopus laevis (African clawed frog)).